Reading from the N-terminus, the 122-residue chain is MAAEEGVVIACHNKDEFDAQMTKAKEAGKVVIIDFTASWCGPCRFIAPVFAEYAKKFPGAVFLKVDVDELKEVAEKYNVEAMPTFLFIKDGAEADKVVGARKDDLQNTIVKHVGATAASASA.

Positions 2–118 constitute a Thioredoxin domain; the sequence is AAEEGVVIAC…IVKHVGATAA (117 aa). A disulfide bridge links C40 with C43.

The protein resides in the cytoplasm. In terms of biological role, participates in various redox reactions through the reversible oxidation of the active center dithiol to a disulfide. The H form is known to activate a number of cytosolic enzymes. The sequence is that of Thioredoxin H-type (TRXH) from Oryza sativa subsp. indica (Rice).